Reading from the N-terminus, the 269-residue chain is Diaminopimelate epimerase (269 aa).

Residues Asn-15, Gln-49, and Asn-66 each coordinate substrate. Cys-75 acts as the Proton donor in catalysis. Substrate-binding positions include 76–77 (GN), Asn-155, Asn-187, and 204–205 (ER). Residue Cys-213 is the Proton acceptor of the active site. Residue 214–215 (GS) coordinates substrate.

Belongs to the diaminopimelate epimerase family. In terms of assembly, homodimer.

Its subcellular location is the cytoplasm. The catalysed reaction is (2S,6S)-2,6-diaminopimelate = meso-2,6-diaminopimelate. Its pathway is amino-acid biosynthesis; L-lysine biosynthesis via DAP pathway; DL-2,6-diaminopimelate from LL-2,6-diaminopimelate: step 1/1. Its function is as follows. Catalyzes the stereoinversion of LL-2,6-diaminopimelate (L,L-DAP) to meso-diaminopimelate (meso-DAP), a precursor of L-lysine and an essential component of the bacterial peptidoglycan. This Rickettsia bellii (strain OSU 85-389) protein is Diaminopimelate epimerase.